The primary structure comprises 643 residues: Protein tramtrack, beta isoform (643 aa).

In terms of domain architecture, BTB spans Thr33–Gln98. Disordered stretches follow at residues Glu118–Gln148 and Ala171–Thr300. Lys123 participates in a covalent cross-link: Glycyl lysine isopeptide (Lys-Gly) (interchain with G-Cter in ubiquitin). Residues Ser125–Pro145 are compositionally biased toward low complexity. Positions Thr176–Ser187 are enriched in polar residues. The segment covering Pro192 to Lys201 has biased composition (basic residues). A Glycyl lysine isopeptide (Lys-Gly) (interchain with G-Cter in ubiquitin) cross-link involves residue Lys201. The segment covering His254–Asn285 has biased composition (basic and acidic residues). Glycyl lysine isopeptide (Lys-Gly) (interchain with G-Cter in ubiquitin) cross-links involve residues Lys355, Lys397, Lys418, Lys457, Lys478, and Lys480. 2 consecutive C2H2-type zinc fingers follow at residues Tyr508–His531 and Tyr538–His561. Lys545 is covalently cross-linked (Glycyl lysine isopeptide (Lys-Gly) (interchain with G-Cter in ubiquitin)). The segment at Gly584–Gln643 is disordered. The span at Ser604–Gln643 shows a compositional bias: low complexity.

In terms of assembly, can form homodimers. Interacts with Trl in vivo via the BTB domain. Interacts with phyl. Interacts with Usp47. Polyubiquitinated by sina. Polyubiquitin linkage is mainly through 'Lys-48', but linkage through 'Lys-63' also occurs. Deubiquitination by Usp47 leads to its stabilization.

The protein resides in the nucleus. Functionally, binds to a number of sites in the transcriptional regulatory region of ftz. Isoform beta is required to repress inappropriate segmentation gene transcription and repress genes incompatible with development of photoreceptor cell fates. Probable repressor of the transcription of the segmentation genes ftz, eve, h, odd, run, and en. Inhibits Trl-dependent activation of eve. May bind to the region AGGGC/TGG. Degradation of ttk is directed by binding of sinah or sina, via the adapter molecule phyl which binds to the BTB domain of ttk. A second method of degradation exists that is phyl-independent, this is mediated by recognition of motifs in the C-terminus of ttk. The polypeptide is Protein tramtrack, beta isoform (ttk) (Drosophila melanogaster (Fruit fly)).